The primary structure comprises 445 residues: Exodeoxyribonuclease 7 large subunit (445 aa).

Belongs to the XseA family. As to quaternary structure, heterooligomer composed of large and small subunits.

Its subcellular location is the cytoplasm. The catalysed reaction is Exonucleolytic cleavage in either 5'- to 3'- or 3'- to 5'-direction to yield nucleoside 5'-phosphates.. Functionally, bidirectionally degrades single-stranded DNA into large acid-insoluble oligonucleotides, which are then degraded further into small acid-soluble oligonucleotides. This is Exodeoxyribonuclease 7 large subunit from Staphylococcus epidermidis (strain ATCC 35984 / DSM 28319 / BCRC 17069 / CCUG 31568 / BM 3577 / RP62A).